The primary structure comprises 533 residues: MQYGNLTTVLLLRNTLLSLNSSSICHVHWLQVIVALLVLIVCIFLYWRTPTGINAPFAGYRSPWEPPLLVQMRYVFNAASMIREGYAKWKDSLFQISRYDGDILIVPPRYLDDLHNKSQEELSAIYGLIRNFGGSYSGITLLGENDVGIRALQTKITPNLAKLCDDIRDEFQYCLDTDFPACRDWTSVSVHPLFLKAVERITHRIFVGLPLCRNPQWVQATSKHAHYATMIQIAMRSVPKFIQPLLNFCLPWPWKNAACVREAKNALILEMQRRRNLEKVNSFDYIKSNDLLQAVMEMSSPSHEDSQLDVVAQIMLTMNTIAGHSTAASGAHALFDMVSHSKYIELLREEALQVFRHVELRVTKQALGDLRKLDSFLRESQRHNPLSLLGFFRVVLDPAGITLQDGTHVPYNTLLCVAPHAISNDPDVIEDPTSFNGLRYYEQRCRDASQEKKHQYATTDKSHLHFGYGTWACPGRFLASDMLKVILTMLLLQYDIRSPERAKRPVAGHFHEFPLFNINTPLLMKRRNDSLVL.

Residues 27–47 traverse the membrane as a helical segment; it reads VHWLQVIVALLVLIVCIFLYW. Asparagine 116 carries an N-linked (GlcNAc...) asparagine glycan. Cysteine 473 lines the heme pocket. A glycan (N-linked (GlcNAc...) asparagine) is linked at asparagine 528.

The protein belongs to the cytochrome P450 family. Requires heme as cofactor.

It is found in the membrane. Its pathway is secondary metabolite biosynthesis. In terms of biological role, cytochrome P450 monooxygenase; part of the gene clusters that mediates the biosynthesis of lolitrems, indole-diterpene mycotoxins that are potent tremorgens in mammals, and are synthesized by clavicipitaceous fungal endophytes in association with their grass hosts. The geranylgeranyl diphosphate (GGPP) synthase ltmG is proposed to catalyze the first step in lolitrem biosynthesis. LtmG catalyzes a series of iterative condensations of isopentenyl diphosphate (IPP) with dimethylallyl diphosphate (DMAPP), geranyl diphosphate (GPP), and farnesyl diphosphate (FPP), to form GGPP. GGPP then condenses with indole-3-glycerol phosphate to form 3-geranylgeranylindole, an acyclic intermediate, to be incorporated into paxilline. Either ltmG or ltmC could be responsible for this step, as both are putative prenyl transferases. The FAD-dependent monooxygenase ltmM then catalyzes the epoxidation of the two terminal alkenes of the geranylgeranyl moiety, which is subsequently cyclized by ltmB, to paspaline. The cytochrome P450 monooxygenases ltmQ and ltmP can sequentially oxidize paspaline to terpendole E and terpendole F. Alternatively, ltmP converts paspaline to an intermediate which is oxidized by ltmQ to terpendole F. LtmF, ltmK, ltmE and ltmJ appear to be unique to the epichloe endophytes. The prenyltransferase ltmF is involved in the 27-hydroxyl-O-prenylation. The cytochrome P450 monooxygenase ltmK is required for the oxidative acetal ring formation. The multi-functional prenyltransferase ltmE is required for C20- and C21-prenylations of the indole ring of paspalanes and acts together with the cytochrome P450 monooxygenase ltmJ to yield lolitremanes by multiple oxidations and ring closures. The stereoisomer pairs of lolitriol and lolitrem N or lolitrem B and lolitrem F may be attributed to variations in the way in which ring closure can occur under the action of ltmJ. While the major product of this pathway is lolitrem B, the prenyl transferases and cytochrome P450 monooxygenases identified in this pathway have a remarkable versatility in their regio- and stereo-specificities to generate a diverse range of metabolites that are products of a metabolic grid rather than a linear pathway. This is Cytochrome P450 monooxygenase ltmK from Epichloe festucae var. lolii (Neotyphodium lolii).